Consider the following 222-residue polypeptide: Large ribosomal subunit protein uL4 (222 aa).

The disordered stretch occupies residues 67–87 (QKGTGNARAGSKRTNVRRGGG).

The protein belongs to the universal ribosomal protein uL4 family. Part of the 50S ribosomal subunit.

In terms of biological role, one of the primary rRNA binding proteins, this protein initially binds near the 5'-end of the 23S rRNA. It is important during the early stages of 50S assembly. It makes multiple contacts with different domains of the 23S rRNA in the assembled 50S subunit and ribosome. Functionally, forms part of the polypeptide exit tunnel. The chain is Large ribosomal subunit protein uL4 from Rhodopirellula baltica (strain DSM 10527 / NCIMB 13988 / SH1).